The chain runs to 382 residues: Lipid-A-disaccharide synthase (382 aa).

It belongs to the LpxB family.

The enzyme catalyses 2-N,3-O-bis[(3R)-3-hydroxytetradecanoyl]-alpha-D-glucosaminyl 1-phosphate + UDP-2-N,3-O-bis[(3R)-3-hydroxytetradecanoyl]-alpha-D-glucosamine = lipid A disaccharide (E. coli) + UDP + H(+). It catalyses the reaction a lipid X + a UDP-2-N,3-O-bis[(3R)-3-hydroxyacyl]-alpha-D-glucosamine = a lipid A disaccharide + UDP + H(+). The protein operates within glycolipid biosynthesis; lipid IV(A) biosynthesis; lipid IV(A) from (3R)-3-hydroxytetradecanoyl-[acyl-carrier-protein] and UDP-N-acetyl-alpha-D-glucosamine: step 5/6. Condensation of UDP-2,3-diacylglucosamine and 2,3-diacylglucosamine-1-phosphate to form lipid A disaccharide, a precursor of lipid A, a phosphorylated glycolipid that anchors the lipopolysaccharide to the outer membrane of the cell. The chain is Lipid-A-disaccharide synthase from Shigella flexneri serotype 5b (strain 8401).